Consider the following 224-residue polypeptide: UPF0758 protein Nmul_A2138 (224 aa).

Residues 102-224 (AMDSPGPVRA…TLSFAEQGLI (123 aa)) enclose the MPN domain. Residues histidine 173, histidine 175, and aspartate 186 each contribute to the Zn(2+) site. The short motif at 173-186 (HNHPSGAAEPSHAD) is the JAMM motif element.

This sequence belongs to the UPF0758 family.

The protein is UPF0758 protein Nmul_A2138 of Nitrosospira multiformis (strain ATCC 25196 / NCIMB 11849 / C 71).